The chain runs to 253 residues: 2-C-methyl-D-erythritol 4-phosphate cytidylyltransferase (253 aa).

The disordered stretch occupies residues 1-28 (MSVSSRPGRRRFALIPSAGTGTRAGGDL).

It belongs to the IspD/TarI cytidylyltransferase family. IspD subfamily.

The catalysed reaction is 2-C-methyl-D-erythritol 4-phosphate + CTP + H(+) = 4-CDP-2-C-methyl-D-erythritol + diphosphate. It participates in isoprenoid biosynthesis; isopentenyl diphosphate biosynthesis via DXP pathway; isopentenyl diphosphate from 1-deoxy-D-xylulose 5-phosphate: step 2/6. Functionally, catalyzes the formation of 4-diphosphocytidyl-2-C-methyl-D-erythritol from CTP and 2-C-methyl-D-erythritol 4-phosphate (MEP). The sequence is that of 2-C-methyl-D-erythritol 4-phosphate cytidylyltransferase from Ralstonia nicotianae (strain ATCC BAA-1114 / GMI1000) (Ralstonia solanacearum).